The sequence spans 106 residues: ATP-dependent Clp protease adapter protein ClpS (106 aa).

It belongs to the ClpS family. In terms of assembly, binds to the N-terminal domain of the chaperone ClpA.

Involved in the modulation of the specificity of the ClpAP-mediated ATP-dependent protein degradation. In Escherichia fergusonii (strain ATCC 35469 / DSM 13698 / CCUG 18766 / IAM 14443 / JCM 21226 / LMG 7866 / NBRC 102419 / NCTC 12128 / CDC 0568-73), this protein is ATP-dependent Clp protease adapter protein ClpS.